The chain runs to 1079 residues: Psi-producing oxygenase A (1079 aa).

The interval threonine 105–valine 446 is linoleate 8R-lipoxygenase. Histidine 202 contacts heme b. Tyrosine 374 is a catalytic residue. Heme b is bound at residue histidine 377. The tract at residues glutamine 654–glutamate 1079 is 9,12-octadecadienoate 8-hydroperoxide 8R-isomerase.

It belongs to the peroxidase family. In terms of assembly, homotetramer. Heme b serves as cofactor.

It catalyses the reaction (9Z,12Z)-octadecadienoate + O2 = (8R,9Z,12Z)-8-hydroperoxyoctadeca-9,12-dienoate. The enzyme catalyses (8R,9Z,12Z)-8-hydroperoxyoctadeca-9,12-dienoate = (5S,8R,9Z,12Z)-5,8-dihydroxyoctadeca-9,12-dienoate. Its function is as follows. Bifunctional heme-containing enzyme that oxidizes linoleic acid to (8R,9Z,12Z)-8-hydroperoxyoctadeca-9,12-dienoate (within the N-terminal heme peroxidase domain), which is subsequently isomerized to (5S,8R,9Z,12Z)-5,8-dihydroxyoctadeca-9,12-dienoate (within the C-terminal P450 heme thiolate domain). Oxidized unsaturated fatty acids, so-called oxylipins, derived from endogenous fatty acids, influence the development of the asexual conidiophores and sexual cleistothecia and regulate the secondary metabolism. These substances were collectively named psi factors and are primarily a mixture of hydroxylated oleic, linoleic and alpha-linolenic acids. They are termed psi-beta, psi-alpha, and psi-gamma, respectively. Oxylipins may also serve as activators of mammalian immune responses contributing to enhanced resistance to opportunistic fungi and as factors that modulate fungal development contributing to resistance to host defenses. The sequence is that of Psi-producing oxygenase A (ppoA) from Aspergillus fumigatus (strain CBS 144.89 / FGSC A1163 / CEA10) (Neosartorya fumigata).